A 126-amino-acid chain; its full sequence is RuBisCO chaperone RbcX (126 aa).

It belongs to the RbcX family. Homodimer. Interacts with the exposed C-terminal peptide of RbcL via its central cleft, contacts a second RbcL monomer via its peripheral polar surface.

Its subcellular location is the carboxysome. The protein localises to the cytoplasm. In terms of biological role, an RbcL-specific chaperone. Required for assembly of the RbcL8 core. The central cleft of the RbcX homodimer (RbcX2) binds the C-terminus of a RbcL monomer, stabilizing the C-terminus and probably preventing its reassociation with chaperonin GroEL-ES. At the same time the peripheral region of RbcX2 binds a second RbcL monomer, bridging the RbcL homodimers in the correct orientation. The RbcX2(2)-bound RbcL dimers then assemble into the RbcL8 core (RbcL8-(RbcX2)8). RbcS binding triggers the release of RbcX2. This chain is RuBisCO chaperone RbcX, found in Thermosynechococcus vestitus (strain NIES-2133 / IAM M-273 / BP-1).